We begin with the raw amino-acid sequence, 342 residues long: Dihydroorotate dehydrogenase (quinone) (342 aa).

Residues 61 to 65 (AGLDK) and Thr-85 each bind FMN. A substrate-binding site is contributed by Lys-65. 110–114 (NRMGF) serves as a coordination point for substrate. FMN-binding residues include Asn-138 and Asn-171. Asn-171 is a binding site for substrate. Ser-174 acts as the Nucleophile in catalysis. Asn-176 serves as a coordination point for substrate. FMN contacts are provided by Lys-216 and Thr-244. 245 to 246 (NT) provides a ligand contact to substrate. Residues Gly-267, Gly-296, and 317-318 (YS) contribute to the FMN site.

Belongs to the dihydroorotate dehydrogenase family. Type 2 subfamily. Monomer. It depends on FMN as a cofactor.

Its subcellular location is the cell membrane. The enzyme catalyses (S)-dihydroorotate + a quinone = orotate + a quinol. Its pathway is pyrimidine metabolism; UMP biosynthesis via de novo pathway; orotate from (S)-dihydroorotate (quinone route): step 1/1. Catalyzes the conversion of dihydroorotate to orotate with quinone as electron acceptor. This Cellvibrio japonicus (strain Ueda107) (Pseudomonas fluorescens subsp. cellulosa) protein is Dihydroorotate dehydrogenase (quinone).